The sequence spans 116 residues: Small ribosomal subunit protein eS24 (116 aa).

Positions 81 to 116 (IEPEHMVERHKKVLEELESESEESEESESEESEEEE) are disordered. The span at 96–116 (ELESESEESEESESEESEEEE) shows a compositional bias: acidic residues.

The protein belongs to the eukaryotic ribosomal protein eS24 family.

The chain is Small ribosomal subunit protein eS24 from Methanopyrus kandleri (strain AV19 / DSM 6324 / JCM 9639 / NBRC 100938).